Reading from the N-terminus, the 846-residue chain is ATR-interacting protein mus304 (846 aa).

Disordered regions lie at residues 20 to 40 (DVSVTRGSARPSPPRNNFDGI), 90 to 109 (QGSTSTQQMFPPPPPPQKKP), and 135 to 162 (EPQKMPEPKTSTSRITTSSISVQQKTTT). Positions 144–162 (TSTSRITTSSISVQQKTTT) are enriched in low complexity. 2 coiled-coil regions span residues 168-240 (ATQS…LADE) and 327-359 (EYSENEDQTKKRRNHFELELKQLLLHYARLQAK). The EEXXXDL motif motif lies at 504 to 510 (EELLFDL). A disordered region spans residues 651-681 (GAVQGSVSNGSTSASVSNPNQNSNSSTTQRG). Over residues 655-676 (GSVSNGSTSASVSNPNQNSNSS) the composition is skewed to low complexity.

This sequence belongs to the ATRIP family. Interacts with ATR/mei-41. Highly expressed in the oocyte and nurse cells from stage 5 onward and in embryos prior to during nuclear division 14. Then, it decreases to background levels during interphase 14. Weakly or not expressed in stage embryos and imaginal disks.

Its subcellular location is the cytoplasm. In terms of biological role, DNA damage checkpoint protein required for chromosome break repair and for genomic stability during development. This Drosophila melanogaster (Fruit fly) protein is ATR-interacting protein mus304 (mus304).